Consider the following 374-residue polypeptide: Queuine tRNA-ribosyltransferase (374 aa).

Asp-89 functions as the Proton acceptor in the catalytic mechanism. Substrate is bound by residues Asp-89 to Phe-93, Asp-143, Gln-187, and Gly-214. Residues Gly-245–Asp-251 are RNA binding. The active-site Nucleophile is Asp-264. The interval Thr-269–Arg-273 is RNA binding; important for wobble base 34 recognition. Positions 302, 304, 307, and 333 each coordinate Zn(2+).

Belongs to the queuine tRNA-ribosyltransferase family. In terms of assembly, homodimer. Within each dimer, one monomer is responsible for RNA recognition and catalysis, while the other monomer binds to the replacement base PreQ1. Zn(2+) serves as cofactor.

It catalyses the reaction 7-aminomethyl-7-carbaguanine + guanosine(34) in tRNA = 7-aminomethyl-7-carbaguanosine(34) in tRNA + guanine. It participates in tRNA modification; tRNA-queuosine biosynthesis. Catalyzes the base-exchange of a guanine (G) residue with the queuine precursor 7-aminomethyl-7-deazaguanine (PreQ1) at position 34 (anticodon wobble position) in tRNAs with GU(N) anticodons (tRNA-Asp, -Asn, -His and -Tyr). Catalysis occurs through a double-displacement mechanism. The nucleophile active site attacks the C1' of nucleotide 34 to detach the guanine base from the RNA, forming a covalent enzyme-RNA intermediate. The proton acceptor active site deprotonates the incoming PreQ1, allowing a nucleophilic attack on the C1' of the ribose to form the product. After dissociation, two additional enzymatic reactions on the tRNA convert PreQ1 to queuine (Q), resulting in the hypermodified nucleoside queuosine (7-(((4,5-cis-dihydroxy-2-cyclopenten-1-yl)amino)methyl)-7-deazaguanosine). The polypeptide is Queuine tRNA-ribosyltransferase (Shewanella sp. (strain MR-4)).